The chain runs to 734 residues: Regulator of G-protein signaling rgs-6 (734 aa).

Residues 1 to 24 are disordered; it reads MSTPCSGNEPATPTNTSPNNETSN. Low complexity predominate over residues 8–24; it reads NEPATPTNTSPNNETSN. An RGS domain is found at 46–157; that stretch reads IFKKVIRDPV…YDCWPRFLRS (112 aa). 3 disordered regions span residues 162 to 236, 489 to 515, and 538 to 734; these read QPSF…SPTH, HAVS…YSPA, and VNAG…AAYV. Residues 166–176 are compositionally biased toward acidic residues; the sequence is TDEELAADDED. Residues 180-191 show a composition bias toward polar residues; it reads HSQPTSLNNTNE. Residues 194 to 208 show a composition bias toward low complexity; that stretch reads AAAQQSQPAPNAPAA. 2 stretches are compositionally biased toward polar residues: residues 494–506 and 538–557; these read SDPN…SQDR and VNAG…SKNR. 2 stretches are compositionally biased toward basic and acidic residues: residues 563-585 and 606-619; these read SKTE…RSDD and TTEE…KSGD. Low complexity predominate over residues 642–694; sequence AAAAAAGASPSTSAPSTSTSVQTKTTTSPTKSPTSTTITTSGTTTSATSSVAT. Polar residues-rich tracts occupy residues 705–715 and 724–734; these read SASTPATSSQL and RESSWQTAAYV.

The sequence is that of Regulator of G-protein signaling rgs-6 from Caenorhabditis elegans.